The sequence spans 249 residues: Globin-like protein 9 (249 aa).

Residues 20–43 form a disordered region; it reads TNKGPNGLARRGTQRGCSRSKSTR. The Globin domain maps to 52 to 205; the sequence is SLTFSQKQAL…LIDELRGGFE (154 aa). Histidine 116 and histidine 148 together coordinate heme.

Belongs to the globin family.

This Caenorhabditis elegans protein is Globin-like protein 9 (glb-9).